A 402-amino-acid polypeptide reads, in one-letter code: 4-hydroxy-3-methylbut-2-enyl diphosphate reductase (402 aa).

Cys-66 is a binding site for [4Fe-4S] cluster. (2E)-4-hydroxy-3-methylbut-2-enyl diphosphate is bound at residue His-96. His-96 contributes to the dimethylallyl diphosphate binding site. His-96 serves as a coordination point for isopentenyl diphosphate. Cys-157 is a binding site for [4Fe-4S] cluster. Position 185 (His-185) interacts with (2E)-4-hydroxy-3-methylbut-2-enyl diphosphate. A dimethylallyl diphosphate-binding site is contributed by His-185. Isopentenyl diphosphate is bound at residue His-185. Residue Glu-187 is the Proton donor of the active site. Thr-250 is a (2E)-4-hydroxy-3-methylbut-2-enyl diphosphate binding site. Cys-288 serves as a coordination point for [4Fe-4S] cluster. Ser-317, Ser-318, Asn-319, and Ser-379 together coordinate (2E)-4-hydroxy-3-methylbut-2-enyl diphosphate. Positions 317, 318, 319, and 379 each coordinate dimethylallyl diphosphate. Isopentenyl diphosphate contacts are provided by Ser-317, Ser-318, Asn-319, and Ser-379.

Belongs to the IspH family. [4Fe-4S] cluster serves as cofactor.

The enzyme catalyses isopentenyl diphosphate + 2 oxidized [2Fe-2S]-[ferredoxin] + H2O = (2E)-4-hydroxy-3-methylbut-2-enyl diphosphate + 2 reduced [2Fe-2S]-[ferredoxin] + 2 H(+). It carries out the reaction dimethylallyl diphosphate + 2 oxidized [2Fe-2S]-[ferredoxin] + H2O = (2E)-4-hydroxy-3-methylbut-2-enyl diphosphate + 2 reduced [2Fe-2S]-[ferredoxin] + 2 H(+). The protein operates within isoprenoid biosynthesis; dimethylallyl diphosphate biosynthesis; dimethylallyl diphosphate from (2E)-4-hydroxy-3-methylbutenyl diphosphate: step 1/1. It participates in isoprenoid biosynthesis; isopentenyl diphosphate biosynthesis via DXP pathway; isopentenyl diphosphate from 1-deoxy-D-xylulose 5-phosphate: step 6/6. Its function is as follows. Catalyzes the conversion of 1-hydroxy-2-methyl-2-(E)-butenyl 4-diphosphate (HMBPP) into a mixture of isopentenyl diphosphate (IPP) and dimethylallyl diphosphate (DMAPP). Acts in the terminal step of the DOXP/MEP pathway for isoprenoid precursor biosynthesis. The sequence is that of 4-hydroxy-3-methylbut-2-enyl diphosphate reductase from Trichormus variabilis (strain ATCC 29413 / PCC 7937) (Anabaena variabilis).